An 86-amino-acid chain; its full sequence is Weak toxin 1 (86 aa).

Residues 1 to 23 (MKTLLLTLVVVAIVCLDLGYTLT) form the signal peptide. 5 cysteine pairs are disulfide-bonded: Cys24–Cys45, Cys27–Cys32, Cys38–Cys63, Cys67–Cys78, and Cys79–Cys84.

It belongs to the three-finger toxin family. Ancestral subfamily. Orphan group II sub-subfamily. In terms of tissue distribution, expressed by the venom gland.

It is found in the secreted. Binds with low affinity to muscular (alpha-1-beta-1-delta-epsilon/CHRNA1-CHRNB1-CHRND-CHRNE) and very low affinity to neuronal (alpha-7/CHRNA7) nicotinic acetylcholine receptor (nAChR). The protein is Weak toxin 1 of Bungarus candidus (Malayan krait).